The primary structure comprises 255 residues: PHD finger protein ALFIN-LIKE 4 (255 aa).

The residue at position 1 (M1) is an N-acetylmethionine. A disordered region spans residues 145 to 200; it reads GKDKSSVSNNSSNRSKSSSKRGSESRAKFSKPEPKDDEEEEEEGVEEEDEDEQGET. The span at 150–160 shows a compositional bias: low complexity; it reads SVSNNSSNRSK. Positions 165 to 178 are enriched in basic and acidic residues; that stretch reads RGSESRAKFSKPEP. The segment covering 179–198 has biased composition (acidic residues); the sequence is KDDEEEEEEGVEEEDEDEQG. A PHD-type zinc finger spans residues 199 to 251; sequence ETQCGACGESYAADEFWICCDLCEMWFHGKCVKITPARAEHIKQYKCPSCSNK.

It belongs to the Alfin family. Interacts with H3K4me3 and to a lesser extent with H3K4me2. In terms of tissue distribution, ubiquitously expressed.

The protein resides in the nucleus. Histone-binding component that specifically recognizes H3 tails trimethylated on 'Lys-4' (H3K4me3), which mark transcription start sites of virtually all active genes. This Arabidopsis thaliana (Mouse-ear cress) protein is PHD finger protein ALFIN-LIKE 4 (AL4).